Here is a 452-residue protein sequence, read N- to C-terminus: UDP-N-acetylmuramoyl-L-alanine--L-glutamate ligase (452 aa).

An ATP-binding site is contributed by 118-124 (GSKGKST).

This sequence belongs to the MurCDEF family. MurD2 subfamily.

Its subcellular location is the cytoplasm. It carries out the reaction UDP-N-acetyl-alpha-D-muramoyl-L-alanine + L-glutamate + ATP = UDP-N-acetyl-alpha-D-muramoyl-L-alanyl-L-glutamate + ADP + phosphate + H(+). The protein operates within cell wall biogenesis; peptidoglycan biosynthesis. In terms of biological role, cell wall formation. Catalyzes the addition of L-glutamate to the nucleotide precursor UDP-N-acetylmuramoyl-L-alanine. The protein is UDP-N-acetylmuramoyl-L-alanine--L-glutamate ligase of Micromonospora sp. (strain ATCC 39149 / NRRL 15099 / SCC 1413).